Reading from the N-terminus, the 204-residue chain is Holliday junction resolvase RecU (204 aa).

Residues Thr-89, Asp-91, Asp-104, and Gln-123 each coordinate Mg(2+).

Belongs to the RecU family. Mg(2+) serves as cofactor.

It is found in the cytoplasm. The enzyme catalyses Endonucleolytic cleavage at a junction such as a reciprocal single-stranded crossover between two homologous DNA duplexes (Holliday junction).. Functionally, endonuclease that resolves Holliday junction intermediates in genetic recombination. Cleaves mobile four-strand junctions by introducing symmetrical nicks in paired strands. Promotes annealing of linear ssDNA with homologous dsDNA. Required for DNA repair, homologous recombination and chromosome segregation. The chain is Holliday junction resolvase RecU from Leuconostoc mesenteroides subsp. mesenteroides (strain ATCC 8293 / DSM 20343 / BCRC 11652 / CCM 1803 / JCM 6124 / NCDO 523 / NBRC 100496 / NCIMB 8023 / NCTC 12954 / NRRL B-1118 / 37Y).